Reading from the N-terminus, the 215-residue chain is Keratin-associated protein 26-1 (215 aa).

The protein belongs to the PMG family. In terms of assembly, interacts with hair keratins.

Functionally, in the hair cortex, hair keratin intermediate filaments are embedded in an interfilamentous matrix, consisting of hair keratin-associated proteins (KRTAP), which are essential for the formation of a rigid and resistant hair shaft through their extensive disulfide bond cross-linking with abundant cysteine residues of hair keratins. The matrix proteins include the high-sulfur and high-glycine-tyrosine keratins. This Mus musculus (Mouse) protein is Keratin-associated protein 26-1.